The chain runs to 348 residues: Fe(3+) ions import ATP-binding protein FbpC (348 aa).

The ABC transporter domain occupies 7–237; that stretch reads VELRNVTKRF…PASRFMASFM (231 aa). Residue 39–46 coordinates ATP; it reads GPSGCGKT.

Belongs to the ABC transporter superfamily. Fe(3+) ion importer (TC 3.A.1.10) family. As to quaternary structure, the complex is composed of two ATP-binding proteins (FbpC), two transmembrane proteins (FbpB) and a solute-binding protein (FbpA).

It is found in the cell inner membrane. The enzyme catalyses Fe(3+)(out) + ATP + H2O = Fe(3+)(in) + ADP + phosphate + H(+). Part of the ABC transporter complex FbpABC involved in Fe(3+) ions import. Responsible for energy coupling to the transport system. This chain is Fe(3+) ions import ATP-binding protein FbpC, found in Escherichia coli O157:H7.